The primary structure comprises 254 residues: 7-cyano-7-deazaguanine synthase (254 aa).

30–40 (YSGGQDSATCL) is a binding site for ATP. Positions 218, 233, 236, and 239 each coordinate Zn(2+).

It belongs to the QueC family. It depends on Zn(2+) as a cofactor.

The enzyme catalyses 7-carboxy-7-deazaguanine + NH4(+) + ATP = 7-cyano-7-deazaguanine + ADP + phosphate + H2O + H(+). It participates in purine metabolism; 7-cyano-7-deazaguanine biosynthesis. In terms of biological role, catalyzes the ATP-dependent conversion of 7-carboxy-7-deazaguanine (CDG) to 7-cyano-7-deazaguanine (preQ(0)). The chain is 7-cyano-7-deazaguanine synthase from Zymomonas mobilis subsp. mobilis (strain ATCC 31821 / ZM4 / CP4).